Reading from the N-terminus, the 440-residue chain is NADH-quinone oxidoreductase subunit D 1 (440 aa).

Belongs to the complex I 49 kDa subunit family. In terms of assembly, NDH-1 is composed of 14 different subunits. Subunits NuoB, C, D, E, F, and G constitute the peripheral sector of the complex.

Its subcellular location is the cell inner membrane. The enzyme catalyses a quinone + NADH + 5 H(+)(in) = a quinol + NAD(+) + 4 H(+)(out). NDH-1 shuttles electrons from NADH, via FMN and iron-sulfur (Fe-S) centers, to quinones in the respiratory chain. The immediate electron acceptor for the enzyme in this species is believed to be a menaquinone. Couples the redox reaction to proton translocation (for every two electrons transferred, four hydrogen ions are translocated across the cytoplasmic membrane), and thus conserves the redox energy in a proton gradient. This Chloroherpeton thalassium (strain ATCC 35110 / GB-78) protein is NADH-quinone oxidoreductase subunit D 1.